Here is an 890-residue protein sequence, read N- to C-terminus: Agglutinin-like protein ARB_02240 (890 aa).

An N-terminal signal peptide occupies residues 1 to 20 (MRLTTSVLLWAATSVLQADA). Asparagine 106, asparagine 217, asparagine 583, and asparagine 654 each carry an N-linked (GlcNAc...) asparagine glycan. A disordered region spans residues 680-872 (IPSGPTTRPE…GGAGSLSPST (193 aa)). Composition is skewed to low complexity over residues 693–753 (TSST…TDSS) and 760–790 (TTSTAESTETTEPTSTDASTESTSTATHSST). A compositionally biased stretch (polar residues) spans 791 to 802 (GSDPESTNTRHP). Composition is skewed to low complexity over residues 803-812 (SSTASGSTTT) and 821-837 (SSSSEGPVPTSMGTATT). Over residues 838–848 (TGGGSIPGSGT) the composition is skewed to gly residues. A lipid anchor (GPI-anchor amidated glycine) is attached at glycine 864. The propeptide at 865 to 890 (AGSLSPSTWGKVVTCISSMALLVAFI) is removed in mature form.

It belongs to the ALS family. The GPI-anchor is attached to the protein in the endoplasmic reticulum and serves to target the protein to the cell surface. There, the glucosamine-inositol phospholipid moiety is cleaved off and the GPI-modified mannoprotein is covalently attached via its lipidless GPI glycan remnant to the 1,6-beta-glucan of the outer cell wall layer.

The protein resides in the secreted. The protein localises to the cell membrane. It is found in the cell wall. In terms of biological role, cell surface adhesion protein which mediates cell agglutination and host tissue adherence. The polypeptide is Agglutinin-like protein ARB_02240 (Arthroderma benhamiae (strain ATCC MYA-4681 / CBS 112371) (Trichophyton mentagrophytes)).